Here is a 688-residue protein sequence, read N- to C-terminus: Polymerase acidic protein (688 aa).

Disordered stretches follow at residues 54–82 (NTEP…TEEG) and 110–129 (EAQA…GGEG). A compositionally biased stretch (basic and acidic residues) spans 56–65 (EPRERSHTQA). Positions 119–129 (GPNEADSGGEG) are enriched in acidic residues.

In terms of assembly, RNA polymerase is composed of three subunits: PA, PB1 and PB2.

Its subcellular location is the virion. The protein resides in the host nucleus. Subunit of the RNA-dependent RNA polymerase which is responsible for replication and transcription of virus RNA segments. The transcription of viral mRNAs occurs by a unique mechanism called cap-snatching. 5' methylated caps of cellular mRNAs are cleaved after 10-13 nucleotides by PA. In turn, these short capped RNAs are used as primers by PB1 for transcription of viral mRNAs. During virus replication, PB1 initiates RNA synthesis and copy vRNA into complementary RNA (cRNA) which in turn serves as a template for the production of more vRNAs. The sequence is that of Polymerase acidic protein (PA) from Ixodidae (hardbacked ticks).